The chain runs to 33 residues: U1-pseudomyrmecitoxin-Pt1 subunit LS1 (33 aa).

This sequence belongs to the myrmexin family. Heterodimer composed of subunit LS1 and subunit SS1 (U1-PSDTX-Pt1b), heterodimer composed of subunit LS1 and SS2 (U1-PSDTX-Pt1b), and heterodimer composed of subunit LS1 and SS3; disulfide-linked. Expressed by the venom gland.

The protein resides in the secreted. Functionally, this heterodimer may have anti-inflammatory properties, since the myrmexin complex (composed of 6 SS-LS heterodimers) inhibits carrageenin-induced edema in a dose-dependent manner (after subcutaneous injection into rats). This Pseudomyrmex triplarinus (Ant) protein is U1-pseudomyrmecitoxin-Pt1 subunit LS1.